A 368-amino-acid chain; its full sequence is Protein ALTERED XYLOGLUCAN 9 (368 aa).

The Cytoplasmic segment spans residues 1–32 (MLGAIHLGVLAACFVLFVPMAMAGWHLSRNKM). Residues 33 to 53 (LFFSGALFISLAVCVHLTPYF) traverse the membrane as a helical segment. Topologically, residues 54 to 368 (PSVSDIVASV…ALLIESHQSL (315 aa)) are lumenal. Asn-99, Asn-137, and Asn-235 each carry an N-linked (GlcNAc...) asparagine glycan.

It is found in the golgi apparatus membrane. In terms of biological role, component of the plant cell wall polysaccharide acetylation pathway. Does not directly catalyze O-acetylation of xyloglucan but exhibits weak acetylesterase activity in vitro. The chain is Protein ALTERED XYLOGLUCAN 9 from Arabidopsis thaliana (Mouse-ear cress).